Here is a 259-residue protein sequence, read N- to C-terminus: Imidazole glycerol phosphate synthase subunit HisF (259 aa).

Catalysis depends on residues aspartate 11 and aspartate 130.

It belongs to the HisA/HisF family. Heterodimer of HisH and HisF.

Its subcellular location is the cytoplasm. It catalyses the reaction 5-[(5-phospho-1-deoxy-D-ribulos-1-ylimino)methylamino]-1-(5-phospho-beta-D-ribosyl)imidazole-4-carboxamide + L-glutamine = D-erythro-1-(imidazol-4-yl)glycerol 3-phosphate + 5-amino-1-(5-phospho-beta-D-ribosyl)imidazole-4-carboxamide + L-glutamate + H(+). It participates in amino-acid biosynthesis; L-histidine biosynthesis; L-histidine from 5-phospho-alpha-D-ribose 1-diphosphate: step 5/9. In terms of biological role, IGPS catalyzes the conversion of PRFAR and glutamine to IGP, AICAR and glutamate. The HisF subunit catalyzes the cyclization activity that produces IGP and AICAR from PRFAR using the ammonia provided by the HisH subunit. The sequence is that of Imidazole glycerol phosphate synthase subunit HisF from Desulfovibrio desulfuricans (strain ATCC 27774 / DSM 6949 / MB).